A 295-amino-acid polypeptide reads, in one-letter code: Methionine aminopeptidase (295 aa).

His-62 contributes to the substrate binding site. A divalent metal cation contacts are provided by Asp-82, Asp-93, and His-153. His-161 contributes to the substrate binding site. 2 residues coordinate a divalent metal cation: Glu-187 and Glu-280.

This sequence belongs to the peptidase M24A family. Methionine aminopeptidase archaeal type 2 subfamily. As to quaternary structure, monomer. It depends on Co(2+) as a cofactor. Zn(2+) is required as a cofactor. Requires Mn(2+) as cofactor. Fe(2+) serves as cofactor.

It catalyses the reaction Release of N-terminal amino acids, preferentially methionine, from peptides and arylamides.. In terms of biological role, removes the N-terminal methionine from nascent proteins. The N-terminal methionine is often cleaved when the second residue in the primary sequence is small and uncharged (Met-Ala-, Cys, Gly, Pro, Ser, Thr, or Val). The polypeptide is Methionine aminopeptidase (Pyrococcus horikoshii (strain ATCC 700860 / DSM 12428 / JCM 9974 / NBRC 100139 / OT-3)).